The following is a 275-amino-acid chain: Chemotaxis protein methyltransferase Cher2 (275 aa).

Residues 1–275 (MSTGNLDFEQ…CSPGIIYQAK (275 aa)) enclose the CheR-type methyltransferase domain. S-adenosyl-L-methionine is bound by residues N73, T75, R79, E116, D145, 201 to 202 (NL), and 218 to 219 (RN).

Monomer.

It carries out the reaction L-glutamyl-[protein] + S-adenosyl-L-methionine = [protein]-L-glutamate 5-O-methyl ester + S-adenosyl-L-homocysteine. In terms of biological role, methylation of the membrane-bound methyl-accepting chemotaxis proteins (MCP) to form gamma-glutamyl methyl ester residues in MCP. Methylates the McpS chemotaxis receptor. This is Chemotaxis protein methyltransferase Cher2 (cheR2) from Pseudomonas putida (strain ATCC 47054 / DSM 6125 / CFBP 8728 / NCIMB 11950 / KT2440).